Reading from the N-terminus, the 149-residue chain is L-alanine exporter AlaE (149 aa).

Helical transmembrane passes span 17-37 (FAMVIFCFITGMFIEIFISGM), 43-63 (LASRMLSIPVNIAIAWPYGVF), 86-106 (LTAYVLFQSPVYAAILFTVGA), and 111-131 (IITAVSSNAAVSCVMGVFYGY).

The protein belongs to the AlaE exporter family.

Its subcellular location is the cell inner membrane. Exports L-alanine. This Aliivibrio salmonicida (strain LFI1238) (Vibrio salmonicida (strain LFI1238)) protein is L-alanine exporter AlaE.